Consider the following 94-residue polypeptide: Small ribosomal subunit protein uS17 (94 aa).

The segment at 1-22 is disordered; that stretch reads MSEQTSAASTTDRGDRKTRRGY.

The protein belongs to the universal ribosomal protein uS17 family. As to quaternary structure, part of the 30S ribosomal subunit.

Functionally, one of the primary rRNA binding proteins, it binds specifically to the 5'-end of 16S ribosomal RNA. In Kineococcus radiotolerans (strain ATCC BAA-149 / DSM 14245 / SRS30216), this protein is Small ribosomal subunit protein uS17.